The primary structure comprises 270 residues: Gene 1 protein (270 aa).

Residues 225-249 are disordered; it reads WAEEDPPVAAVPLEPEDATAPGKEP.

The protein is Gene 1 protein (1) of Mycobacterium (Mycobacteriophage D29).